The sequence spans 116 residues: Fluoride-specific ion channel FluC 1 (116 aa).

The next 4 helical transmembrane spans lie at 1–21, 32–52, 54–74, and 93–113; these read MYAP…RYLV, FPLG…WLAG, GAAD…FTTF, and VVVY…LGYH. Gly69 and Thr72 together coordinate Na(+).

The protein belongs to the fluoride channel Fluc/FEX (TC 1.A.43) family.

It localises to the cell membrane. It catalyses the reaction fluoride(in) = fluoride(out). Its activity is regulated as follows. Na(+) is not transported, but it plays an essential structural role and its presence is essential for fluoride channel function. In terms of biological role, fluoride-specific ion channel. Important for reducing fluoride concentration in the cell, thus reducing its toxicity. This Geobacillus kaustophilus (strain HTA426) protein is Fluoride-specific ion channel FluC 1.